The sequence spans 252 residues: Curing of [URE3] protein 1 (252 aa).

It localises to the nucleus. Involved in the curing of prion [URE3]. Nuclear localization of this protein may suggest a role in transcription regulation, so it might exert an effect on [URE3] through known prion-curing chaperones or BTN2. The chain is Curing of [URE3] protein 1 (CUR1) from Saccharomyces cerevisiae (strain ATCC 204508 / S288c) (Baker's yeast).